Consider the following 446-residue polypeptide: Phosphoglucosamine mutase (446 aa).

Ser-99 acts as the Phosphoserine intermediate in catalysis. 4 residues coordinate Mg(2+): Ser-99, Asp-242, Asp-244, and Asp-246. Position 99 is a phosphoserine (Ser-99).

It belongs to the phosphohexose mutase family. Mg(2+) is required as a cofactor. In terms of processing, activated by phosphorylation.

The enzyme catalyses alpha-D-glucosamine 1-phosphate = D-glucosamine 6-phosphate. Catalyzes the conversion of glucosamine-6-phosphate to glucosamine-1-phosphate. This is Phosphoglucosamine mutase from Wolinella succinogenes (strain ATCC 29543 / DSM 1740 / CCUG 13145 / JCM 31913 / LMG 7466 / NCTC 11488 / FDC 602W) (Vibrio succinogenes).